A 271-amino-acid chain; its full sequence is GPN-loop GTPase 3 (271 aa).

13–18 (GAGKST) is a GTP binding site. A Gly-Pro-Asn (GPN)-loop; involved in dimer interface motif is present at residues 70-72 (GPN). 173 to 176 (SKVD) contributes to the GTP binding site.

Belongs to the GPN-loop GTPase family. Heterodimers with GPN1 or GPN2. Binds to RNA polymerase II (RNAPII).

Its function is as follows. Small GTPase required for proper nuclear import of RNA polymerase II and III (RNAPII and RNAPIII). May act at an RNAP assembly step prior to nuclear import. In Eremothecium gossypii (strain ATCC 10895 / CBS 109.51 / FGSC 9923 / NRRL Y-1056) (Yeast), this protein is GPN-loop GTPase 3.